The primary structure comprises 99 residues: NADH-quinone oxidoreductase subunit K (99 aa).

The next 3 helical transmembrane spans lie at proline 3–leucine 23, isoleucine 28–phenylalanine 48, and valine 59–isoleucine 79.

This sequence belongs to the complex I subunit 4L family. In terms of assembly, NDH-1 is composed of 14 different subunits. Subunits NuoA, H, J, K, L, M, N constitute the membrane sector of the complex.

The protein localises to the cell membrane. The catalysed reaction is a quinone + NADH + 5 H(+)(in) = a quinol + NAD(+) + 4 H(+)(out). NDH-1 shuttles electrons from NADH, via FMN and iron-sulfur (Fe-S) centers, to quinones in the respiratory chain. The immediate electron acceptor for the enzyme in this species is believed to be a menaquinone. Couples the redox reaction to proton translocation (for every two electrons transferred, four hydrogen ions are translocated across the cytoplasmic membrane), and thus conserves the redox energy in a proton gradient. The polypeptide is NADH-quinone oxidoreductase subunit K (Mycobacteroides abscessus (strain ATCC 19977 / DSM 44196 / CCUG 20993 / CIP 104536 / JCM 13569 / NCTC 13031 / TMC 1543 / L948) (Mycobacterium abscessus)).